Consider the following 1120-residue polypeptide: Transcription-repair-coupling factor (1120 aa).

Positions Asp591–Ile756 constitute a Helicase ATP-binding domain. An ATP-binding site is contributed by Gly604–Thr611. Residues Asp709–Gln712 carry the DEEQ box motif. The Helicase C-terminal domain maps to Ile777 to Arg933.

It in the N-terminal section; belongs to the UvrB family. This sequence in the C-terminal section; belongs to the helicase family. RecG subfamily.

Its subcellular location is the cytoplasm. Couples transcription and DNA repair by recognizing RNA polymerase (RNAP) stalled at DNA lesions. Mediates ATP-dependent release of RNAP and its truncated transcript from the DNA, and recruitment of nucleotide excision repair machinery to the damaged site. The polypeptide is Transcription-repair-coupling factor (Rickettsia prowazekii (strain Madrid E)).